A 454-amino-acid polypeptide reads, in one-letter code: Allantoinase (454 aa).

Residues His60, His62, Lys147, His183, His239, and Asp312 each coordinate Zn(2+). Lys147 carries the post-translational modification N6-carboxylysine.

The protein belongs to the metallo-dependent hydrolases superfamily. Allantoinase family. In terms of assembly, homotetramer. Requires Zn(2+) as cofactor. In terms of processing, carboxylation allows a single lysine to coordinate two zinc ions.

The enzyme catalyses (S)-allantoin + H2O = allantoate + H(+). It functions in the pathway nitrogen metabolism; (S)-allantoin degradation; allantoate from (S)-allantoin: step 1/1. Catalyzes the conversion of allantoin (5-ureidohydantoin) to allantoic acid by hydrolytic cleavage of the five-member hydantoin ring. The polypeptide is Allantoinase (Rubrobacter xylanophilus (strain DSM 9941 / JCM 11954 / NBRC 16129 / PRD-1)).